Consider the following 90-residue polypeptide: Small ribosomal subunit protein bS16 (90 aa).

Belongs to the bacterial ribosomal protein bS16 family.

The chain is Small ribosomal subunit protein bS16 from Lysinibacillus sphaericus (strain C3-41).